A 125-amino-acid polypeptide reads, in one-letter code: Ino eighty subunit 5 (125 aa).

The residue at position 124 (T124) is a Phosphothreonine.

In terms of assembly, component of the chromatin-remodeling INO80 complex, at least composed of ARP4, ARP5, ARP8, RVB1, RVB2, TAF14, NHP10, IES1, IES3, IES4, IES6, ACT1, IES2, IES5 and INO80.

Its subcellular location is the nucleus. The chain is Ino eighty subunit 5 (IES5) from Saccharomyces cerevisiae (strain ATCC 204508 / S288c) (Baker's yeast).